Reading from the N-terminus, the 154-residue chain is Small ribosomal subunit protein bS18 (154 aa).

Residues 1–82 (MEKKTTKKAT…PFAKYNRGYP (82 aa)) form a disordered region. The span at 8-19 (KATASKTTTTKK) shows a compositional bias: low complexity. The span at 20-32 (AAAEKTEIKETKK) shows a compositional bias: basic and acidic residues. Positions 33 to 49 (TTTTKTSTAKKATTASV) are enriched in low complexity. Residues 50-69 (EKTEVKETKKSSDNKKEFNP) show a composition bias toward basic and acidic residues.

This sequence belongs to the bacterial ribosomal protein bS18 family. Part of the 30S ribosomal subunit. Forms a tight heterodimer with protein bS6.

Functionally, binds as a heterodimer with protein bS6 to the central domain of the 16S rRNA, where it helps stabilize the platform of the 30S subunit. The sequence is that of Small ribosomal subunit protein bS18 from Malacoplasma penetrans (strain HF-2) (Mycoplasma penetrans).